The primary structure comprises 422 residues: Serine hydroxymethyltransferase (422 aa).

(6S)-5,6,7,8-tetrahydrofolate-binding positions include leucine 119 and 123–125 (GHL). An N6-(pyridoxal phosphate)lysine modification is found at lysine 228. Residues glutamate 244 and 352–354 (SPF) contribute to the (6S)-5,6,7,8-tetrahydrofolate site.

It belongs to the SHMT family. In terms of assembly, homodimer. Pyridoxal 5'-phosphate is required as a cofactor.

The protein resides in the cytoplasm. The enzyme catalyses (6R)-5,10-methylene-5,6,7,8-tetrahydrofolate + glycine + H2O = (6S)-5,6,7,8-tetrahydrofolate + L-serine. It functions in the pathway one-carbon metabolism; tetrahydrofolate interconversion. The protein operates within amino-acid biosynthesis; glycine biosynthesis; glycine from L-serine: step 1/1. Catalyzes the reversible interconversion of serine and glycine with tetrahydrofolate (THF) serving as the one-carbon carrier. This reaction serves as the major source of one-carbon groups required for the biosynthesis of purines, thymidylate, methionine, and other important biomolecules. Also exhibits THF-independent aldolase activity toward beta-hydroxyamino acids, producing glycine and aldehydes, via a retro-aldol mechanism. This chain is Serine hydroxymethyltransferase, found in Magnetococcus marinus (strain ATCC BAA-1437 / JCM 17883 / MC-1).